A 431-amino-acid chain; its full sequence is Histidine--tRNA ligase (431 aa).

This sequence belongs to the class-II aminoacyl-tRNA synthetase family. As to quaternary structure, homodimer.

The protein localises to the cytoplasm. It carries out the reaction tRNA(His) + L-histidine + ATP = L-histidyl-tRNA(His) + AMP + diphosphate + H(+). The polypeptide is Histidine--tRNA ligase (Levilactobacillus brevis (strain ATCC 367 / BCRC 12310 / CIP 105137 / JCM 1170 / LMG 11437 / NCIMB 947 / NCTC 947) (Lactobacillus brevis)).